Consider the following 385-residue polypeptide: Putative glutamate--cysteine ligase 2 (385 aa).

Belongs to the glutamate--cysteine ligase type 2 family. YbdK subfamily.

The enzyme catalyses L-cysteine + L-glutamate + ATP = gamma-L-glutamyl-L-cysteine + ADP + phosphate + H(+). Its function is as follows. ATP-dependent carboxylate-amine ligase which exhibits weak glutamate--cysteine ligase activity. This chain is Putative glutamate--cysteine ligase 2, found in Solibacter usitatus (strain Ellin6076).